A 439-amino-acid polypeptide reads, in one-letter code: ATP-dependent protease ATPase subunit HslU (439 aa).

Residues Ile-17, 59-64 (GVGKTE), Asp-251, Glu-317, and Arg-389 contribute to the ATP site.

The protein belongs to the ClpX chaperone family. HslU subfamily. In terms of assembly, a double ring-shaped homohexamer of HslV is capped on each side by a ring-shaped HslU homohexamer. The assembly of the HslU/HslV complex is dependent on binding of ATP.

The protein localises to the cytoplasm. ATPase subunit of a proteasome-like degradation complex; this subunit has chaperone activity. The binding of ATP and its subsequent hydrolysis by HslU are essential for unfolding of protein substrates subsequently hydrolyzed by HslV. HslU recognizes the N-terminal part of its protein substrates and unfolds these before they are guided to HslV for hydrolysis. This is ATP-dependent protease ATPase subunit HslU from Campylobacter jejuni subsp. jejuni serotype O:2 (strain ATCC 700819 / NCTC 11168).